Reading from the N-terminus, the 427-residue chain is 3-phosphoshikimate 1-carboxyvinyltransferase (427 aa).

3-phosphoshikimate-binding residues include Lys21, Ser22, and Arg26. Phosphoenolpyruvate is bound at residue Lys21. Gly93 and Arg121 together coordinate phosphoenolpyruvate. Ser166, Gln168, Asp314, and Lys341 together coordinate 3-phosphoshikimate. Gln168 serves as a coordination point for phosphoenolpyruvate. Asp314 serves as the catalytic Proton acceptor. Residues Arg345 and Arg387 each contribute to the phosphoenolpyruvate site.

Belongs to the EPSP synthase family. Monomer.

It is found in the cytoplasm. It catalyses the reaction 3-phosphoshikimate + phosphoenolpyruvate = 5-O-(1-carboxyvinyl)-3-phosphoshikimate + phosphate. It functions in the pathway metabolic intermediate biosynthesis; chorismate biosynthesis; chorismate from D-erythrose 4-phosphate and phosphoenolpyruvate: step 6/7. Functionally, catalyzes the transfer of the enolpyruvyl moiety of phosphoenolpyruvate (PEP) to the 5-hydroxyl of shikimate-3-phosphate (S3P) to produce enolpyruvyl shikimate-3-phosphate and inorganic phosphate. The polypeptide is 3-phosphoshikimate 1-carboxyvinyltransferase (Alkaliphilus oremlandii (strain OhILAs) (Clostridium oremlandii (strain OhILAs))).